Reading from the N-terminus, the 730-residue chain is MPPTPWAPHSYPPTRRSDHVDVYQSASRGEVPVPDPYQWLEENSNEVDEWTTAQTAFTQGYLDKNADRQKLEEKFRASKDYVKFSAPTLLDSGHWYWFYNSGVQSQAVLYRSKKPVLPDFQRGTRKVGEVYFDPNVLSADGTAIMGTCRFSPSGEYFAYAVSHLGVDYFTIYVRPTSSSLSQAPEAEGGDGRLSDGVKWCKFTTITWTKDSKGFLYQRYPARESLVAKDRDKDAMVCYHRVGTTQLEDIIVQQDKENPDWTYGTDASEDGKYIYLVVYKDASKQNLLWVAEFDKDGVKPEIPWRKVINEFGADYHVITNHGSLIYVKTNVNAPQYKVVTIDLSTGEPEIRDFIPEQKDAKLTQVKCVNKGYFVAIYKRNVKDEIYLYSKAGDQLSRLASDFIGVASITNREKQPHSFLTFSGFNTPGTISRYDFTAPDTQRLSILRTTKLNGLNADDFESTQVWYKSKDGTKVPMFIVRHKSTKFDGTAPAIQNGYGGFAITADPFFSPIMLTFMQTYGAILAVPNIRGGGEFGGEWHKAGRRETKGNTFDDFIAAAQFLVKNKYAAPGKVAITGASNGGFLVCGSVVRAPEGTFGAAVSEGGVADLLKFNKFTGGMAWTSEYGNPFIKEDFDFVQALSPVHNVPKDRVLPATLLMTNAGDDRVVPMHSLKFVANLQYNVPQNPHPLLIRVDKSWLGHGFGKTTDKHTKDAADKWSFVAQSLGLEWKTVD.

Active-site charge relay system residues include Ser-577, Asp-661, and His-698.

The protein belongs to the peptidase S9A family. Monomer. As to expression, expressed in the pileus (cap) and lamellae where it colocalizes with amanitin.

The enzyme catalyses Hydrolysis of Pro-|-Xaa &gt;&gt; Ala-|-Xaa in oligopeptides.. In terms of biological role, dual function macrocyclase-peptidase involved in the biosynthesis of the highly toxic amanitin toxin family of macrocycles. Cleaves peptide bonds on the C-terminal side of prolyl residues. The enzyme first removes 10 residues from the N-terminus of a 35-residue substrate. Conformational trapping of the 25 amino-acid peptide forces the enzyme to release this intermediate rather than proceed to macrocyclization. The enzyme rebinds the 25 amino-acid peptide in a different conformation and catalyzes macrocyclization of the N-terminal eight residues. This chain is Dual function macrocyclase-peptidase POPB, found in Amanita bisporigera (Destroying angel).